A 374-amino-acid chain; its full sequence is MVLWESPRQCSSWTLCEGFCWLLLLPVMLLIVARPVKLAAFPTSLSDCQTPTGWNCSGYDDRENDLFLCDTNTCKFDGECLRIGDTVTCVCQFKCNSDYVPVCGSNGESYQNECYLRQAACKQQSEILVVSEGSCATDAGSGSGDGVHEGSGETSQKETSTCDICQFGAECDEDAEDVWCVCNIDCSQTNFNPLCASDGKSYDNACQIKEASCQKQEKIEVMSLGRCQDNTTTTTKSEDGHYARTDFAENANKLEESAREHHIPCPEHYNGFCMHGKCEHSINMQEPSCRCDAGYTGQHCEKKDYSVLYVVPGPVRFQYVLIAAVIGTIQIAVICVVVLCITRKCPRSNRIHRQKQNTGHYSSDNTTRASTRLI.

The first 39 residues, 1–39 (MVLWESPRQCSSWTLCEGFCWLLLLPVMLLIVARPVKLA), serve as a signal peptide directing secretion. At 40 to 320 (AFPTSLSDCQ…VPGPVRFQYV (281 aa)) the chain is on the extracellular side. N-linked (GlcNAc...) asparagine glycosylation is present at Asn55. Kazal-like domains lie at 90–137 (VCQF…SCAT) and 181–229 (VCNI…RCQD). Cystine bridges form between Cys91–Cys121, Cys95–Cys114, Cys103–Cys135, Cys182–Cys213, Cys186–Cys206, Cys195–Cys227, Cys265–Cys278, Cys273–Cys289, and Cys291–Cys300. The 41-residue stretch at 261–301 (HHIPCPEHYNGFCMHGKCEHSINMQEPSCRCDAGYTGQHCE) folds into the EGF-like domain. The tract at residues 303–320 (KDYSVLYVVPGPVRFQYV) is required for shedding. A helical transmembrane segment spans residues 321–341 (LIAAVIGTIQIAVICVVVLCI). The Cytoplasmic segment spans residues 342 to 374 (TRKCPRSNRIHRQKQNTGHYSSDNTTRASTRLI). The tract at residues 353 to 374 (RQKQNTGHYSSDNTTRASTRLI) is disordered. Positions 356-374 (QNTGHYSSDNTTRASTRLI) are enriched in polar residues.

This sequence belongs to the tomoregulin family. In terms of processing, O-glycosylated; contains chondroitin sulfate glycosaminoglycans. A soluble form (TMEFF2-ECD) is produced by proteolytic shedding. This shedding can be induced by phorbol ester or pro-inflammatory cytokines such as TNFalpha, and is mediated by a metalloproteinase ADAM.

The protein localises to the membrane. Functionally, may be a survival factor for hippocampal and mesencephalic neurons. The shedded form may up-regulate cell proliferation. The chain is Tomoregulin-2 (TMEFF2) from Bos taurus (Bovine).